The following is a 264-amino-acid chain: MYAQPKLTSAEYVQHHMSHWKLNLYNFTFTDGGFWTLNLDTLIISVVLGALFILIFYIVARRATASVPGKWQNAIEMAVEAVDGTVKDSFHGDRSLVAPLALTIFIWVFLMNFMDLVPVDLIPRLFQMGGVEHFKAVPTADPTLTFAMSITVFVLVIFYNFKMKGAIGLGKEVLSRPFGWYLMPINVIFRLIDEGVKPISLALRLFGNLFAGELIFILIALLPWWSQFTLGMVWTLFHLLVITVQAFIFMMLTVVYISLAAESH.

5 helical membrane passes run 39-59 (LDTL…FYIV), 97-117 (VAPL…MDLV), 139-159 (TADP…VIFY), 205-225 (LFGN…LPWW), and 239-259 (LLVI…YISL).

It belongs to the ATPase A chain family. F-type ATPases have 2 components, CF(1) - the catalytic core - and CF(0) - the membrane proton channel. CF(1) has five subunits: alpha(3), beta(3), gamma(1), delta(1), epsilon(1). CF(0) has three main subunits: a(1), b(2) and c(9-12). The alpha and beta chains form an alternating ring which encloses part of the gamma chain. CF(1) is attached to CF(0) by a central stalk formed by the gamma and epsilon chains, while a peripheral stalk is formed by the delta and b chains.

It localises to the cell inner membrane. In terms of biological role, key component of the proton channel; it plays a direct role in the translocation of protons across the membrane. In Coxiella burnetii (strain RSA 331 / Henzerling II), this protein is ATP synthase subunit a.